The following is a 309-amino-acid chain: Sulfate adenylyltransferase subunit 2 (309 aa).

Belongs to the PAPS reductase family. CysD subfamily. As to quaternary structure, heterodimer composed of CysD, the smaller subunit, and CysN.

The catalysed reaction is sulfate + ATP + H(+) = adenosine 5'-phosphosulfate + diphosphate. The protein operates within sulfur metabolism; hydrogen sulfide biosynthesis; sulfite from sulfate: step 1/3. In terms of biological role, with CysN forms the ATP sulfurylase (ATPS) that catalyzes the adenylation of sulfate producing adenosine 5'-phosphosulfate (APS) and diphosphate, the first enzymatic step in sulfur assimilation pathway. APS synthesis involves the formation of a high-energy phosphoric-sulfuric acid anhydride bond driven by GTP hydrolysis by CysN coupled to ATP hydrolysis by CysD. The sequence is that of Sulfate adenylyltransferase subunit 2 from Mycolicibacterium vanbaalenii (strain DSM 7251 / JCM 13017 / BCRC 16820 / KCTC 9966 / NRRL B-24157 / PYR-1) (Mycobacterium vanbaalenii).